The primary structure comprises 297 residues: 33 kDa chaperonin (297 aa).

Intrachain disulfides connect Cys239/Cys241 and Cys272/Cys275.

This sequence belongs to the HSP33 family. In terms of processing, under oxidizing conditions two disulfide bonds are formed involving the reactive cysteines. Under reducing conditions zinc is bound to the reactive cysteines and the protein is inactive.

The protein localises to the cytoplasm. In terms of biological role, redox regulated molecular chaperone. Protects both thermally unfolding and oxidatively damaged proteins from irreversible aggregation. Plays an important role in the bacterial defense system toward oxidative stress. In Clostridium acetobutylicum (strain ATCC 824 / DSM 792 / JCM 1419 / IAM 19013 / LMG 5710 / NBRC 13948 / NRRL B-527 / VKM B-1787 / 2291 / W), this protein is 33 kDa chaperonin.